The following is a 131-amino-acid chain: Ribosome-binding factor A (131 aa).

Belongs to the RbfA family. In terms of assembly, monomer. Binds 30S ribosomal subunits, but not 50S ribosomal subunits or 70S ribosomes.

The protein localises to the cytoplasm. In terms of biological role, one of several proteins that assist in the late maturation steps of the functional core of the 30S ribosomal subunit. Associates with free 30S ribosomal subunits (but not with 30S subunits that are part of 70S ribosomes or polysomes). Required for efficient processing of 16S rRNA. May interact with the 5'-terminal helix region of 16S rRNA. The sequence is that of Ribosome-binding factor A from Ruegeria sp. (strain TM1040) (Silicibacter sp.).